A 336-amino-acid chain; its full sequence is Eukaryotic translation initiation factor 3 subunit I (336 aa).

WD repeat units lie at residues 8–47 (GHER…RLGT), 50–91 (GHLG…KVWE), 146–185 (CTES…QLEN), 190–229 (EFDH…ILKT), and 287–326 (GHFG…FDFM).

Belongs to the eIF-3 subunit I family. In terms of assembly, component of the eukaryotic translation initiation factor 3 (eIF-3) complex.

The protein localises to the cytoplasm. In terms of biological role, component of the eukaryotic translation initiation factor 3 (eIF-3) complex, which is involved in protein synthesis of a specialized repertoire of mRNAs and, together with other initiation factors, stimulates binding of mRNA and methionyl-tRNAi to the 40S ribosome. The eIF-3 complex specifically targets and initiates translation of a subset of mRNAs involved in cell proliferation. This is Eukaryotic translation initiation factor 3 subunit I (tif34) from Emericella nidulans (strain FGSC A4 / ATCC 38163 / CBS 112.46 / NRRL 194 / M139) (Aspergillus nidulans).